The following is a 521-amino-acid chain: (+)-kolavenyl diphosphate synthase (521 aa).

Mg(2+) is bound by residues Asp-311 and Asp-313. The short motif at 311-314 (DGDD) is the DXDD motif element.

Belongs to the terpene synthase family. The cofactor is Mg(2+).

It carries out the reaction (2E,6E,10E)-geranylgeranyl diphosphate = (+)-kolavenyl diphosphate. Involved in the biosynthesis of (+)-O-methylkolavelool. Catalyzes the conversion of geranylgeranyl diphosphate into (+)-kolavenyl diphosphate. In Herpetosiphon aurantiacus (strain ATCC 23779 / DSM 785 / 114-95), this protein is (+)-kolavenyl diphosphate synthase.